The chain runs to 206 residues: Protein Nef (206 aa).

G2 carries N-myristoyl glycine; by host lipidation. At S6 the chain carries Phosphoserine; by host. The tract at residues 62–65 is acidic; interacts with host PACS1 and PACS2; stabilizes the interaction of NEF/MHC-I with host AP1M1; necessary for MHC-I internalization; sequence QNEE. The SH3-binding; interaction with Src family tyrosine kinases stretch occupies residues 69 to 78; the sequence is PVRPQVPLRP. Positions 72–75 match the PxxP; stabilizes the interaction of NEF/MHC-I with host AP1M1; necessary for MHC-I internalization motif; sequence PQVP. Residues 108–124 are mediates dimerization, Nef-PTE1 interaction; that stretch reads EILDLWVYHTQGFFPDW. Residues 148–180 form a binding to ATP6V1H region; it reads LEPEEVERANEGDNNILLHPICQHGQEDEAREV. The Dileucine internalization motif; necessary for CD4 internalization motif lies at 164 to 165; that stretch reads LL. Positions 174–175 match the Diacidic; necessary for CD4 internalization motif; the sequence is ED.

It belongs to the lentivirus primate group Nef protein family. Monomer; cytosolic form. Homodimer; membrane bound form. Interacts with Nef associated p21-activated kinase (PAK2); this interaction activates PAK2. Associates with the Nef-MHC-I-AP1 complex; this complex is required for MHC-I internalization. Interacts (via C-terminus) with host PI3-kinase. Interacts with host PACS1; this interaction seems to be weak. Interacts with host PACS2. Interacts with host LCK and MAPK3; these interactions inhibit the kinase activity of the latter. Interacts with host ATP6V1H; this interaction may play a role in CD4 endocytosis. Associates with the CD4-Nef-AP2 complex; this complex is required for CD4 internalization. Interacts with host AP2 subunit alpha and AP2 subunit sigma2. Interacts with TCR-zeta chain; this interaction up-regulates the Fas ligand (FasL) surface expression. Interacts with host HCK, LYN, and SRC; these interactions activate the Src family kinases. Interacts with MAP3K5; this interaction inhibits the Fas and TNFR-mediated death signals. Interacts with beta-COP and PTE1. Interacts with human RACK1; this increases Nef phosphorylation by PKC. Interacts with TP53; this interaction decreases the half-life of TP53, protecting the infected cell against p53-mediated apoptosis. The virion-associated Nef proteins are cleaved by the viral protease to release the soluble C-terminal core protein. Nef is probably cleaved concomitantly with viral structural proteins on maturation of virus particles. Post-translationally, myristoylated. In terms of processing, phosphorylated on serine residues, probably by host PKCdelta and theta.

The protein localises to the host cell membrane. It is found in the virion. The protein resides in the secreted. It localises to the host Golgi apparatus membrane. Factor of infectivity and pathogenicity, required for optimal virus replication. Alters numerous pathways of T-lymphocyte function and down-regulates immunity surface molecules in order to evade host defense and increase viral infectivity. Alters the functionality of other immunity cells, like dendritic cells, monocytes/macrophages and NK cells. Its function is as follows. In infected CD4(+) T-lymphocytes, down-regulates the surface MHC-I, mature MHC-II, CD4, CD28, CCR5 and CXCR4 molecules. Mediates internalization and degradation of host CD4 through the interaction of with the cytoplasmic tail of CD4, the recruitment of AP-2 (clathrin adapter protein complex 2), internalization through clathrin coated pits, and subsequent transport to endosomes and lysosomes for degradation. Diverts host MHC-I molecules to the trans-Golgi network-associated endosomal compartments by an endocytic pathway to finally target them for degradation. MHC-I down-regulation may involve AP-1 (clathrin adapter protein complex 1) or possibly Src family kinase-ZAP70/Syk-PI3K cascade recruited by PACS2. In consequence infected cells are masked for immune recognition by cytotoxic T-lymphocytes. Decreasing the number of immune receptors also prevents reinfection by more HIV particles (superinfection). Down-regulates host SERINC3 and SERINC5 thereby excluding these proteins from the viral particles. Virion infectivity is drastically higher when SERINC3 or SERINC5 are excluded from the viral envelope, because these host antiviral proteins impair the membrane fusion event necessary for subsequent virion penetration. Functionally, bypasses host T-cell signaling by inducing a transcriptional program nearly identical to that of anti-CD3 cell activation. Interaction with TCR-zeta chain up-regulates the Fas ligand (FasL). Increasing surface FasL molecules and decreasing surface MHC-I molecules on infected CD4(+) cells send attacking cytotoxic CD8+ T-lymphocytes into apoptosis. In terms of biological role, plays a role in optimizing the host cell environment for viral replication without causing cell death by apoptosis. Protects the infected cells from apoptosis in order to keep them alive until the next virus generation is ready to strike. Inhibits the Fas and TNFR-mediated death signals by blocking MAP3K5/ASK1. Decreases the half-life of TP53, protecting the infected cell against p53-mediated apoptosis. Inhibits the apoptotic signals regulated by the Bcl-2 family proteins through the formation of a Nef/PI3-kinase/PAK2 complex that leads to activation of PAK2 and induces phosphorylation of host BAD. Extracellular Nef protein targets CD4(+) T-lymphocytes for apoptosis by interacting with CXCR4 surface receptors. In Simian immunodeficiency virus (isolate MB66) (SIV-cpz), this protein is Protein Nef.